We begin with the raw amino-acid sequence, 59 residues long: Cuticle protein 7 isoform c (59 aa).

Glutamine 1 is subject to Pyrrolidone carboxylic acid.

This Limulus polyphemus (Atlantic horseshoe crab) protein is Cuticle protein 7 isoform c.